A 358-amino-acid polypeptide reads, in one-letter code: Phospho-N-acetylmuramoyl-pentapeptide-transferase (358 aa).

10 helical membrane passes run 3 to 23, 54 to 74, 84 to 104, 114 to 134, 156 to 176, 187 to 207, 231 to 251, 255 to 275, 283 to 303, and 330 to 350; these read QILF…PALI, GVAI…IGIA, ALLV…DDFI, LTAA…GVLA, ITTV…VVVA, LDGL…IITF, LALV…WNAA, IFMG…LSIT, VVIG…VAVF, and VIIR…GLFY.

Belongs to the glycosyltransferase 4 family. MraY subfamily. Mg(2+) serves as cofactor.

It localises to the cell membrane. It catalyses the reaction UDP-N-acetyl-alpha-D-muramoyl-L-alanyl-gamma-D-glutamyl-meso-2,6-diaminopimeloyl-D-alanyl-D-alanine + di-trans,octa-cis-undecaprenyl phosphate = di-trans,octa-cis-undecaprenyl diphospho-N-acetyl-alpha-D-muramoyl-L-alanyl-D-glutamyl-meso-2,6-diaminopimeloyl-D-alanyl-D-alanine + UMP. It functions in the pathway cell wall biogenesis; peptidoglycan biosynthesis. Its function is as follows. Catalyzes the initial step of the lipid cycle reactions in the biosynthesis of the cell wall peptidoglycan: transfers peptidoglycan precursor phospho-MurNAc-pentapeptide from UDP-MurNAc-pentapeptide onto the lipid carrier undecaprenyl phosphate, yielding undecaprenyl-pyrophosphoryl-MurNAc-pentapeptide, known as lipid I. The protein is Phospho-N-acetylmuramoyl-pentapeptide-transferase of Nocardia farcinica (strain IFM 10152).